A 151-amino-acid chain; its full sequence is Shadow of prion protein (151 aa).

The signal sequence occupies residues 1 to 24; sequence MNWAPATCWALLLAAAFLCDSGAA. The segment at 89 to 113 is disordered; the sequence is WRRAAGPGERGLEDEEDGVPGGNGT. An N-linked (GlcNAc...) asparagine glycan is attached at Asn-111. Gly-126 carries the GPI-anchor amidated glycine lipid modification. A propeptide spans 127–151 (removed in mature form); sequence AGPTRGPRLCLVLGGALGALGLLRP.

The protein belongs to the SPRN family. In terms of processing, N-glycosylated. As to expression, mainly expressed in brain. In brain, it is expressed in hippocampus.

It is found in the cell membrane. Its function is as follows. Prion-like protein that has PrP(C)-like neuroprotective activity. May act as a modulator for the biological actions of normal and abnormal PrP. This Homo sapiens (Human) protein is Shadow of prion protein (SPRN).